Consider the following 262-residue polypeptide: Tetrahydromethanopterin S-methyltransferase subunit C (262 aa).

The next 6 membrane-spanning stretches (helical) occupy residues 35 to 57 (FVPS…AGAN), 70 to 92 (GVPS…GVLI), 97 to 119 (GLPV…FIVG), 140 to 162 (LSLM…FSAD), 172 to 194 (GVIA…ACIG), and 214 to 236 (WLIF…FWLY).

The protein belongs to the MtrC family. In terms of assembly, the complex is composed of 8 subunits; MtrA, MtrB, MtrC, MtrD, MtrE, MtrF, MtrG and MtrH.

It localises to the cell membrane. It carries out the reaction 5-methyl-5,6,7,8-tetrahydromethanopterin + coenzyme M + 2 Na(+)(in) = 5,6,7,8-tetrahydromethanopterin + methyl-coenzyme M + 2 Na(+)(out). It participates in one-carbon metabolism; methanogenesis from CO(2); methyl-coenzyme M from 5,10-methylene-5,6,7,8-tetrahydromethanopterin: step 2/2. In terms of biological role, part of a complex that catalyzes the formation of methyl-coenzyme M and tetrahydromethanopterin from coenzyme M and methyl-tetrahydromethanopterin. This is an energy-conserving, sodium-ion translocating step. The protein is Tetrahydromethanopterin S-methyltransferase subunit C of Methanococcus maripaludis (strain DSM 14266 / JCM 13030 / NBRC 101832 / S2 / LL).